Reading from the N-terminus, the 296-residue chain is Probable endonuclease 4 (296 aa).

9 residues coordinate Zn(2+): H68, H109, E144, D178, H181, H213, D226, H228, and E258.

It belongs to the AP endonuclease 2 family. Zn(2+) is required as a cofactor.

The enzyme catalyses Endonucleolytic cleavage to 5'-phosphooligonucleotide end-products.. Endonuclease IV plays a role in DNA repair. It cleaves phosphodiester bonds at apurinic or apyrimidinic (AP) sites, generating a 3'-hydroxyl group and a 5'-terminal sugar phosphate. In Staphylococcus aureus (strain NCTC 8325 / PS 47), this protein is Probable endonuclease 4.